A 107-amino-acid chain; its full sequence is Proteinase inhibitor 1 (107 aa).

The signal sequence occupies residues 1 to 23; it reads MELKFAHIIVFFLLATSFETLMA. The propeptide occupies 24–36; it reads RKESDGPEVIQLL.

Belongs to the protease inhibitor I13 (potato type I serine protease inhibitor) family.

The chain is Proteinase inhibitor 1 from Solanum tuberosum (Potato).